The chain runs to 37 residues: Large ribosomal subunit protein bL36c (37 aa).

The protein belongs to the bacterial ribosomal protein bL36 family.

It localises to the plastid. The protein localises to the chloroplast. In Cucumis sativus (Cucumber), this protein is Large ribosomal subunit protein bL36c.